We begin with the raw amino-acid sequence, 362 residues long: MPNSKTNIKAYTRQELRDTIAALGEPAYRADQIHRWLFSDWVTDFEKMKNISASLREELSRRYVIPSCSFENEAIEERSVSAPETSKFLVGLHDDEMVETVLIPSPDRHTVCVSSQVGCPLRCTFCATGYMGFTRNLLASEIVEQVLLVNERLGDRSPDNHVTNMVFMGMGEPLLNLNNVFDAIETLTNQSYNFSLSRKRITISTVGLIPQIGELARSGLSIKLAISLHAADQEKRTSLIPVAKEHTLEELRHALHEYADMVKEPVTLVYMLIEGVNDADQDAINLIRFAQGFLCKINLIDYNCIVNVKFNPVKAEKRDRFIHTLVNAGVHVTVRKSQGASIDAACGQLALQKKNKTASRPY.

Catalysis depends on Glu99, which acts as the Proton acceptor. A Radical SAM core domain is found at 105–341 (SPDRHTVCVS…VTVRKSQGAS (237 aa)). Cys112 and Cys346 are disulfide-bonded. Residues Cys119, Cys123, and Cys126 each coordinate [4Fe-4S] cluster. S-adenosyl-L-methionine is bound by residues 171-172 (GE), Ser204, 227-229 (SLH), and Asn303. Residue Cys346 is the S-methylcysteine intermediate of the active site.

This sequence belongs to the radical SAM superfamily. RlmN family. [4Fe-4S] cluster is required as a cofactor.

It is found in the cytoplasm. It carries out the reaction adenosine(2503) in 23S rRNA + 2 reduced [2Fe-2S]-[ferredoxin] + 2 S-adenosyl-L-methionine = 2-methyladenosine(2503) in 23S rRNA + 5'-deoxyadenosine + L-methionine + 2 oxidized [2Fe-2S]-[ferredoxin] + S-adenosyl-L-homocysteine. The enzyme catalyses adenosine(37) in tRNA + 2 reduced [2Fe-2S]-[ferredoxin] + 2 S-adenosyl-L-methionine = 2-methyladenosine(37) in tRNA + 5'-deoxyadenosine + L-methionine + 2 oxidized [2Fe-2S]-[ferredoxin] + S-adenosyl-L-homocysteine. Functionally, specifically methylates position 2 of adenine 2503 in 23S rRNA and position 2 of adenine 37 in tRNAs. The sequence is that of Probable dual-specificity RNA methyltransferase RlmN from Chlorobium phaeobacteroides (strain BS1).